A 182-amino-acid chain; its full sequence is tRNA-splicing endonuclease (182 aa).

Residues tyrosine 119, histidine 127, and lysine 158 contribute to the active site.

This sequence belongs to the tRNA-intron endonuclease family. Archaeal short subfamily. As to quaternary structure, homotetramer; although the tetramer contains four active sites, only two participate in the cleavage. Therefore, it should be considered as a dimer of dimers.

It carries out the reaction pretRNA = a 3'-half-tRNA molecule with a 5'-OH end + a 5'-half-tRNA molecule with a 2',3'-cyclic phosphate end + an intron with a 2',3'-cyclic phosphate and a 5'-hydroxyl terminus.. In terms of biological role, endonuclease that removes tRNA introns. Cleaves pre-tRNA at the 5'- and 3'-splice sites to release the intron. The products are an intron and two tRNA half-molecules bearing 2',3' cyclic phosphate and 5'-OH termini. Recognizes a pseudosymmetric substrate in which 2 bulged loops of 3 bases are separated by a stem of 4 bp. In Saccharolobus islandicus (strain M.14.25 / Kamchatka #1) (Sulfolobus islandicus), this protein is tRNA-splicing endonuclease.